Reading from the N-terminus, the 699-residue chain is SPX domain-containing membrane protein At4g22990 (699 aa).

Residues 2–145 (VAFGKKLKER…GYRFTNYYVK (144 aa)) form the SPX domain. The next 6 helical transmembrane spans lie at 249-269 (FMSLLLNLVNTFLYMVNTYII), 280-300 (LGAAATVCGVVIGAMAVAQLF), 317-337 (LIFSSIVLFIGNLLYALAFDF), 339-358 (SIAVLLIGRLFCGLGSARAV), 377-397 (AGFVSASALGMACGPALAGLL), and 413-433 (LPGWVMAVAWLIYLVWLAISF). Residues 475-490 (IEEQGEDECDGSEEAS) show a composition bias toward acidic residues. The segment at 475-494 (IEEQGEDECDGSEEASEDSR) is disordered. 5 helical membrane passes run 515–535 (LLIYFMLKYAMEILLSESSVI), 546–566 (SVAIFLFCLGLTVLPVNLVVG), 578–598 (ILLVSEIMVCVGILLSFHVVV), 606–626 (VCSGLIMFVSAEVLEGVNLSL), and 671–691 (MLLNVTLLPSLVICVLSIVAT).

It belongs to the major facilitator superfamily.

The protein resides in the membrane. In Arabidopsis thaliana (Mouse-ear cress), this protein is SPX domain-containing membrane protein At4g22990.